Here is a 131-residue protein sequence, read N- to C-terminus: Small ribosomal subunit protein uS8 (131 aa).

This sequence belongs to the universal ribosomal protein uS8 family. In terms of assembly, part of the 30S ribosomal subunit. Contacts proteins S5 and S12.

One of the primary rRNA binding proteins, it binds directly to 16S rRNA central domain where it helps coordinate assembly of the platform of the 30S subunit. The chain is Small ribosomal subunit protein uS8 from Methylobacillus flagellatus (strain ATCC 51484 / DSM 6875 / VKM B-1610 / KT).